A 94-amino-acid chain; its full sequence is Small ribosomal subunit protein uS17 (94 aa).

The interval 1–22 is disordered; that stretch reads MASSSTEGQAAARGRKKSWTGK.

Belongs to the universal ribosomal protein uS17 family. In terms of assembly, part of the 30S ribosomal subunit.

In terms of biological role, one of the primary rRNA binding proteins, it binds specifically to the 5'-end of 16S ribosomal RNA. In Chlorobium luteolum (strain DSM 273 / BCRC 81028 / 2530) (Pelodictyon luteolum), this protein is Small ribosomal subunit protein uS17.